The sequence spans 304 residues: Elongation factor Ts (304 aa).

The involved in Mg(2+) ion dislocation from EF-Tu stretch occupies residues 79 to 82; sequence TDFV.

The protein belongs to the EF-Ts family.

The protein resides in the cytoplasm. Associates with the EF-Tu.GDP complex and induces the exchange of GDP to GTP. It remains bound to the aminoacyl-tRNA.EF-Tu.GTP complex up to the GTP hydrolysis stage on the ribosome. This is Elongation factor Ts from Polaromonas sp. (strain JS666 / ATCC BAA-500).